The following is a 1003-amino-acid chain: Cation-transporting ATPase HMA5 (1003 aa).

The tract at residues 6–25 is disordered; sequence LSAVAGGGRPAAAGGGGDEM. Positions 10 to 22 are enriched in gly residues; it reads AGGGRPAAAGGGG. HMA domains are found at residues 51 to 117, 133 to 199, and 207 to 273; these read EEAH…FDAE, LSAQ…FEAA, and DKIL…NGRL. Cysteine 62, cysteine 65, cysteine 144, and cysteine 147 together coordinate Cu cation. 8 helical membrane passes run 302 to 322, 331 to 351, 372 to 392, 396 to 416, 562 to 582, 599 to 619, 938 to 958, and 966 to 986; these read SLFLSIPVFFIRMVCPHIPFI, GPFHMGDLLKWILVSIVQFVV, VLVVLGTTASYVYSVCALLYG, GFHPPIYFETSAMIITFVLFG, IFVPIVITLSMITFLVWFLCG, FVFSLMFAIAVVVIACPCALG, FFAMAYNVVAIPVAAGALFPF, and WLAGACMAFSSVSVVCSSLLL.

This sequence belongs to the cation transport ATPase (P-type) (TC 3.A.3) family. Type IB subfamily. In terms of tissue distribution, expressed in root vascular cylinder, vascular bundles and mesophyll cells of leaf blades, and anther walls and microspores of stamens.

Its subcellular location is the cell membrane. In terms of biological role, metal efflux transporter that may play a role in detoxification of heavy metals, such as zinc, copper, lead and cadmium, especially in the shoots. The sequence is that of Cation-transporting ATPase HMA5 from Oryza sativa subsp. japonica (Rice).